The primary structure comprises 224 residues: Phosphoribosylformylglycinamidine synthase subunit PurQ (224 aa).

In terms of domain architecture, Glutamine amidotransferase type-1 spans 2–224; sequence KFAVIVFPGS…IVDNFVKGGV (223 aa). Residue Cys-86 is the Nucleophile of the active site. Catalysis depends on residues His-194 and Glu-196.

In terms of assembly, part of the FGAM synthase complex composed of 1 PurL, 1 PurQ and 2 PurS subunits.

It localises to the cytoplasm. It catalyses the reaction N(2)-formyl-N(1)-(5-phospho-beta-D-ribosyl)glycinamide + L-glutamine + ATP + H2O = 2-formamido-N(1)-(5-O-phospho-beta-D-ribosyl)acetamidine + L-glutamate + ADP + phosphate + H(+). The enzyme catalyses L-glutamine + H2O = L-glutamate + NH4(+). It functions in the pathway purine metabolism; IMP biosynthesis via de novo pathway; 5-amino-1-(5-phospho-D-ribosyl)imidazole from N(2)-formyl-N(1)-(5-phospho-D-ribosyl)glycinamide: step 1/2. Part of the phosphoribosylformylglycinamidine synthase complex involved in the purines biosynthetic pathway. Catalyzes the ATP-dependent conversion of formylglycinamide ribonucleotide (FGAR) and glutamine to yield formylglycinamidine ribonucleotide (FGAM) and glutamate. The FGAM synthase complex is composed of three subunits. PurQ produces an ammonia molecule by converting glutamine to glutamate. PurL transfers the ammonia molecule to FGAR to form FGAM in an ATP-dependent manner. PurS interacts with PurQ and PurL and is thought to assist in the transfer of the ammonia molecule from PurQ to PurL. The polypeptide is Phosphoribosylformylglycinamidine synthase subunit PurQ (Caldanaerobacter subterraneus subsp. tengcongensis (strain DSM 15242 / JCM 11007 / NBRC 100824 / MB4) (Thermoanaerobacter tengcongensis)).